A 600-amino-acid polypeptide reads, in one-letter code: ATP-dependent RNA helicase DDX55 (600 aa).

The short motif at 9–37 is the Q motif element; it reads WESLPVPLHPQVLGALRELGFPYMTPVQS. The 184-residue stretch at 40 to 223 folds into the Helicase ATP-binding domain; sequence IPLFMRNKDV…RAGLRNPVRV (184 aa). An ATP-binding site is contributed by 53-60; the sequence is AVTGSGKT. Positions 171–174 match the DEAD box motif; it reads DEAD. In terms of domain architecture, Helicase C-terminal spans 254–402; sequence KFNQLVHFLR…EMKPQRNTAD (149 aa). A compositionally biased stretch (basic and acidic residues) spans 500-513; it reads EQQRREKTENEGRR. Residues 500–550 form a disordered region; the sequence is EQQRREKTENEGRRKFIKNKAWSKQKAKKEKKKKMNEKRKREEGSDIEDED. Positions 514–537 are enriched in basic residues; that stretch reads KFIKNKAWSKQKAKKEKKKKMNEK. The important for nuclear localization stretch occupies residues 533–562; it reads KMNEKRKREEGSDIEDEDMEELLNDTRLLK. S544 and S594 each carry phosphoserine.

This sequence belongs to the DEAD box helicase family. DDX55/SPB4 subfamily. In terms of assembly, interacts with 28S rRNA. Interacts with double-stranded RNA substrates in vitro; the interaction stimulates ATPase activity.

It is found in the nucleus. The protein resides in the nucleoplasm. The catalysed reaction is ATP + H2O = ADP + phosphate + H(+). Functionally, probable ATP-binding RNA helicase. Has ATPase activity and is involved in the maturation of precursor large subunit rRNAs. This chain is ATP-dependent RNA helicase DDX55, found in Homo sapiens (Human).